Consider the following 327-residue polypeptide: Biotin synthase (327 aa).

A Radical SAM core domain is found at 49-273; the sequence is FNKDKIDLCS…ICIARIALPD (225 aa). Positions 67, 71, and 74 each coordinate [4Fe-4S] cluster. [2Fe-2S] cluster is bound by residues S110, C142, C201, and R277.

It belongs to the radical SAM superfamily. Biotin synthase family. As to quaternary structure, homodimer. It depends on [4Fe-4S] cluster as a cofactor. [2Fe-2S] cluster serves as cofactor.

It carries out the reaction (4R,5S)-dethiobiotin + (sulfur carrier)-SH + 2 reduced [2Fe-2S]-[ferredoxin] + 2 S-adenosyl-L-methionine = (sulfur carrier)-H + biotin + 2 5'-deoxyadenosine + 2 L-methionine + 2 oxidized [2Fe-2S]-[ferredoxin]. It participates in cofactor biosynthesis; biotin biosynthesis; biotin from 7,8-diaminononanoate: step 2/2. In terms of biological role, catalyzes the conversion of dethiobiotin (DTB) to biotin by the insertion of a sulfur atom into dethiobiotin via a radical-based mechanism. This Methanococcus maripaludis (strain C6 / ATCC BAA-1332) protein is Biotin synthase.